Reading from the N-terminus, the 169-residue chain is uncharacterized protein (169 aa).

3 helical membrane-spanning segments follow: residues alanine 25–phenylalanine 45, phenylalanine 57–phenylalanine 77, and leucine 91–valine 111.

Belongs to the major facilitator superfamily. Allantoate permease family.

The protein resides in the membrane. This is an uncharacterized protein from Saccharomyces cerevisiae (strain ATCC 204508 / S288c) (Baker's yeast).